The following is a 354-amino-acid chain: Holliday junction branch migration complex subunit RuvB (354 aa).

A large ATPase domain (RuvB-L) region spans residues 4-190 (TDKLAAERII…FGIVARLEFY (187 aa)). ATP-binding positions include L29, R30, G71, K74, T75, T76, 137–139 (EDY), R180, Y190, and R227. T75 lines the Mg(2+) pocket. Positions 191–261 (NAEELARIVT…VADAALKMLD (71 aa)) are small ATPAse domain (RuvB-S). Residues 264–354 (AVGFDLMDRK…LPGLWDSAAT (91 aa)) are head domain (RuvB-H). Positions 300, 319, and 324 each coordinate DNA.

It belongs to the RuvB family. In terms of assembly, homohexamer. Forms an RuvA(8)-RuvB(12)-Holliday junction (HJ) complex. HJ DNA is sandwiched between 2 RuvA tetramers; dsDNA enters through RuvA and exits via RuvB. An RuvB hexamer assembles on each DNA strand where it exits the tetramer. Each RuvB hexamer is contacted by two RuvA subunits (via domain III) on 2 adjacent RuvB subunits; this complex drives branch migration. In the full resolvosome a probable DNA-RuvA(4)-RuvB(12)-RuvC(2) complex forms which resolves the HJ.

The protein localises to the cytoplasm. The enzyme catalyses ATP + H2O = ADP + phosphate + H(+). The RuvA-RuvB-RuvC complex processes Holliday junction (HJ) DNA during genetic recombination and DNA repair, while the RuvA-RuvB complex plays an important role in the rescue of blocked DNA replication forks via replication fork reversal (RFR). RuvA specifically binds to HJ cruciform DNA, conferring on it an open structure. The RuvB hexamer acts as an ATP-dependent pump, pulling dsDNA into and through the RuvAB complex. RuvB forms 2 homohexamers on either side of HJ DNA bound by 1 or 2 RuvA tetramers; 4 subunits per hexamer contact DNA at a time. Coordinated motions by a converter formed by DNA-disengaged RuvB subunits stimulates ATP hydrolysis and nucleotide exchange. Immobilization of the converter enables RuvB to convert the ATP-contained energy into a lever motion, pulling 2 nucleotides of DNA out of the RuvA tetramer per ATP hydrolyzed, thus driving DNA branch migration. The RuvB motors rotate together with the DNA substrate, which together with the progressing nucleotide cycle form the mechanistic basis for DNA recombination by continuous HJ branch migration. Branch migration allows RuvC to scan DNA until it finds its consensus sequence, where it cleaves and resolves cruciform DNA. This Paraburkholderia phytofirmans (strain DSM 17436 / LMG 22146 / PsJN) (Burkholderia phytofirmans) protein is Holliday junction branch migration complex subunit RuvB.